A 584-amino-acid chain; its full sequence is ATP-dependent lipid A-core flippase 2 (584 aa).

The next 6 membrane-spanning stretches (helical) occupy residues 32-52 (IFIA…MIYF), 68-88 (TLQL…IASF), 146-166 (SAVV…SMMV), 167-187 (YNSW…ALII), 254-274 (AISN…VLLL), and 280-300 (VLNQ…GSLL). In terms of domain architecture, ABC transmembrane type-1 spans 33–315 (FIALAGLCLF…LSNINQQLQK (283 aa)). An ABC transporter domain is found at 347 to 583 (IRFNNFSFTY…AGYYQSLYQS (237 aa)). 381 to 388 (GESGSGKS) serves as a coordination point for ATP.

It belongs to the ABC transporter superfamily. Lipid exporter (TC 3.A.1.106) family. Homodimer.

Its subcellular location is the cell inner membrane. It catalyses the reaction ATP + H2O + lipid A-core oligosaccharideSide 1 = ADP + phosphate + lipid A-core oligosaccharideSide 2.. Involved in lipopolysaccharide (LPS) biosynthesis. Translocates lipid A-core from the inner to the outer leaflet of the inner membrane. Transmembrane domains (TMD) form a pore in the inner membrane and the ATP-binding domain (NBD) is responsible for energy generation. In Colwellia psychrerythraea (strain 34H / ATCC BAA-681) (Vibrio psychroerythus), this protein is ATP-dependent lipid A-core flippase 2.